The primary structure comprises 278 residues: 2-dehydro-3-deoxyphosphooctonate aldolase (278 aa).

Belongs to the KdsA family.

Its subcellular location is the cytoplasm. The enzyme catalyses D-arabinose 5-phosphate + phosphoenolpyruvate + H2O = 3-deoxy-alpha-D-manno-2-octulosonate-8-phosphate + phosphate. Its pathway is carbohydrate biosynthesis; 3-deoxy-D-manno-octulosonate biosynthesis; 3-deoxy-D-manno-octulosonate from D-ribulose 5-phosphate: step 2/3. It functions in the pathway bacterial outer membrane biogenesis; lipopolysaccharide biosynthesis. This Dechloromonas aromatica (strain RCB) protein is 2-dehydro-3-deoxyphosphooctonate aldolase.